The primary structure comprises 316 residues: Lys-63-specific deubiquitinase BRCC36 (316 aa).

Alanine 2 carries the N-acetylalanine modification. In terms of domain architecture, MPN spans 12-179 (VHLESDAFLV…YTCFQSIQAQ (168 aa)). Histidine 122, histidine 124, and aspartate 135 together coordinate Zn(2+). The JAMM motif signature appears at 122–135 (HSHPHITVWPSHVD). At serine 258 the chain carries Phosphoserine.

Belongs to the peptidase M67A family. BRCC36 subfamily. Component of the ARISC complex, at least composed of UIMC1/RAP80, ABRAXAS1, BRCC3/BRCC36, BABAM2 and BABAM1/NBA1. Component of the BRCA1-A complex, at least composed of BRCA1, BARD1, UIMC1/RAP80, ABRAXAS1, BRCC3/BRCC36, babam2 and BABAM1/NBA1. In the BRCA1-A complex, interacts directly with ABRAXAS1 and babam2. Component of the BRISC complex, at least composed of ABRAXAS2, BRCC3/BRCC36, BABAM2 and BABAM1/NBA1. Identified in a complex with SHMT2 and the other subunits of the BRISC complex. In the BRISC complex, interacts directly with ABRAXAS2. Identified in a complex with ABRAXAS2 and NUMA1. The BRISC complex interacts with the CSN complex. Component of the BRCA1/BRCA2 containing complex (BRCC), which also contains BRCA1, BRCA2, BARD1, BABAM2 and RAD51. BRCC is a ubiquitin E3 ligase complex that enhances cellular survival following DNA damage. Interacts with BRCA1. Binds polyubiquitin. Interacts with PWWP2B. Interacts with HDAC1; this interaction is enhanced in the presence of PWWP2B. The cofactor is Zn(2+). Heart, brain, placenta, lung, liver, skeletal muscle, kidney and pancreas. Aberrantly expressed in the vast majority of breast tumors.

Its subcellular location is the nucleus. The protein resides in the cytoplasm. The protein localises to the cytoskeleton. It is found in the spindle pole. In terms of biological role, metalloprotease that specifically cleaves 'Lys-63'-linked polyubiquitin chains. Does not have activity toward 'Lys-48'-linked polyubiquitin chains. Component of the BRCA1-A complex, a complex that specifically recognizes 'Lys-63'-linked ubiquitinated histones H2A and H2AX at DNA lesions sites, leading to target the BRCA1-BARD1 heterodimer to sites of DNA damage at double-strand breaks (DSBs). In the BRCA1-A complex, it specifically removes 'Lys-63'-linked ubiquitin on histones H2A and H2AX, antagonizing the RNF8-dependent ubiquitination at double-strand breaks (DSBs). Catalytic subunit of the BRISC complex, a multiprotein complex that specifically cleaves 'Lys-63'-linked ubiquitin in various substrates. Mediates the specific 'Lys-63'-specific deubiquitination associated with the COP9 signalosome complex (CSN), via the interaction of the BRISC complex with the CSN complex. The BRISC complex is required for normal mitotic spindle assembly and microtubule attachment to kinetochores via its role in deubiquitinating NUMA1. Plays a role in interferon signaling via its role in the deubiquitination of the interferon receptor IFNAR1; deubiquitination increases IFNAR1 activity by enhancing its stability and cell surface expression. Acts as a regulator of the NLRP3 inflammasome by mediating deubiquitination of NLRP3, leading to NLRP3 inflammasome assembly. Down-regulates the response to bacterial lipopolysaccharide (LPS) via its role in IFNAR1 deubiquitination. Deubiquitinates HDAC1 and PWWP2B leading to their stabilization. This Homo sapiens (Human) protein is Lys-63-specific deubiquitinase BRCC36 (BRCC3).